The primary structure comprises 667 residues: DNA ligase (667 aa).

Residues 34–38 (DQEYD), 83–84 (SL), and glutamate 114 contribute to the NAD(+) site. The N6-AMP-lysine intermediate role is filled by lysine 116. The NAD(+) site is built by arginine 137, glutamate 170, lysine 286, and lysine 310. Residues cysteine 404, cysteine 407, cysteine 422, and cysteine 427 each contribute to the Zn(2+) site. The BRCT domain maps to 588 to 667 (HLAQKFENYR…EFQQLLSKED (80 aa)).

It belongs to the NAD-dependent DNA ligase family. LigA subfamily. Mg(2+) serves as cofactor. The cofactor is Mn(2+).

The enzyme catalyses NAD(+) + (deoxyribonucleotide)n-3'-hydroxyl + 5'-phospho-(deoxyribonucleotide)m = (deoxyribonucleotide)n+m + AMP + beta-nicotinamide D-nucleotide.. In terms of biological role, DNA ligase that catalyzes the formation of phosphodiester linkages between 5'-phosphoryl and 3'-hydroxyl groups in double-stranded DNA using NAD as a coenzyme and as the energy source for the reaction. It is essential for DNA replication and repair of damaged DNA. In Spiroplasma citri, this protein is DNA ligase.